The sequence spans 323 residues: Annexin A3 (323 aa).

An N-acetylalanine modification is found at alanine 2. Annexin repeat units follow at residues 18–89, 90–161, 173–245, and 249–320; these read FSPS…ALVT, APAL…TLAD, HLAK…AIVH, and NTPA…KICG. Lysine 177 is subject to N6-acetyllysine. Threonine 267 bears the Phosphothreonine mark.

It belongs to the annexin family.

Inhibitor of phospholipase A2, also possesses anti-coagulant properties. In Mus musculus (Mouse), this protein is Annexin A3 (Anxa3).